The primary structure comprises 2114 residues: Protein CELLULOSE SYNTHASE INTERACTIVE 2 (2114 aa).

ARM repeat units follow at residues 2-42, 46-87, 89-128, 135-177, 180-219, 222-262, 265-305, 354-394, 396-435, 479-519, 522-561, 563-595, 601-640, 643-682, 708-750, 774-816, 825-865, 870-910, 914-953, 994-1033, 1044-1083, 1087-1128, 1141-1182, 1185-1225, 1227-1264, 1265-1304, 1312-1353, 1355-1394, 1396-1435, 1454-1494, 1496-1525, 1526-1564, 1566-1605, 1606-1648, 1650-1689, 1690-1730, 1732-1771, 1772-1813, 1816-1855, 1857-1898, 1901-1940, and 1949-1993; these read TSEM…LLGL, KKEC…VLCK, KNVR…EVSL, NVGT…NLCG, DGFW…RLIR, TSSI…AITS, EEAI…SYGT, GDTR…SLFG, VDLS…NLCK, EESR…NLCC, EEIR…KLIK, ADPS…HVLA, EFVT…DLFS, KDLC…SLSN, AKTN…RVLR, SDVF…LLAK, HNPF…RFCK, LLGR…CAAK, TLWA…IQRP, PSNR…KWIA, PKVV…ALVR, DKTI…LVQN, ERVR…RIAD, DLSK…SLFR, PEIT…LCEL, FSSE…ALVK, RPDI…FLFT, EGLR…RLLD, KRFV…KMAK, ISQL…MVQP, LLIL…KPMV, LESL…SLLE, QRFQ…RSSV, TWPK…NILR, NPEH…ENQD, SSSV…RNPK, RETK…DISQ, HEGL…NFAM, RTSR…SLFS, HTLQ…TILT, PKLR…TLRQ, and TARS…CLPG. Positions 1974 to 2087 constitute a C2 domain; sequence SPAPSSFHER…LSEGSYSGIF (114 aa).

In terms of assembly, associates with cellulase synthase (CESA) complexes. Binds to cortical microtubules.

The protein resides in the cell membrane. The protein localises to the cytoplasm. It is found in the cytoskeleton. Functionally, regulator of the microtubular cytoskeleton. Microtubule-associated protein involved in the association of cellulase synthase (CESA) complexes (CSCs) and cortical microtubules. Promotes dynamics of CSCs in the plasma membrane. Regulates primary cell wall biosynthesis and cellulose microfibrils organization. In Arabidopsis thaliana (Mouse-ear cress), this protein is Protein CELLULOSE SYNTHASE INTERACTIVE 2.